A 173-amino-acid chain; its full sequence is Shikimate kinase 1 (173 aa).

Gly14–Thr19 is a binding site for ATP. Ser18 provides a ligand contact to Mg(2+). Residues Asp36, Arg60, and Gly82 each contribute to the substrate site. Arg120 lines the ATP pocket. Residue Arg140 participates in substrate binding. Gln157 is a binding site for ATP.

This sequence belongs to the shikimate kinase family. In terms of assembly, monomer. Mg(2+) serves as cofactor.

It localises to the cytoplasm. It carries out the reaction shikimate + ATP = 3-phosphoshikimate + ADP + H(+). The protein operates within metabolic intermediate biosynthesis; chorismate biosynthesis; chorismate from D-erythrose 4-phosphate and phosphoenolpyruvate: step 5/7. Its function is as follows. Catalyzes the specific phosphorylation of the 3-hydroxyl group of shikimic acid using ATP as a cosubstrate. This Escherichia fergusonii (strain ATCC 35469 / DSM 13698 / CCUG 18766 / IAM 14443 / JCM 21226 / LMG 7866 / NBRC 102419 / NCTC 12128 / CDC 0568-73) protein is Shikimate kinase 1.